The primary structure comprises 86 residues: Neuropeptide-like 3 (86 aa).

An N-terminal signal peptide occupies residues 1–16 (MFKLCVFVALLSLAAA). 2 propeptides span residues 17 to 50 (APAP…VAPQ) and 63 to 75 (AITQ…LLIK). Isoleucine amide is present on Ile85.

It is found in the secreted. The sequence is that of Neuropeptide-like 3 (Nplp3) from Drosophila yakuba (Fruit fly).